Here is a 213-residue protein sequence, read N- to C-terminus: Probable nicotinate-nucleotide adenylyltransferase (213 aa).

This sequence belongs to the NadD family.

It catalyses the reaction nicotinate beta-D-ribonucleotide + ATP + H(+) = deamido-NAD(+) + diphosphate. Its pathway is cofactor biosynthesis; NAD(+) biosynthesis; deamido-NAD(+) from nicotinate D-ribonucleotide: step 1/1. In terms of biological role, catalyzes the reversible adenylation of nicotinate mononucleotide (NaMN) to nicotinic acid adenine dinucleotide (NaAD). This chain is Probable nicotinate-nucleotide adenylyltransferase, found in Trichlorobacter lovleyi (strain ATCC BAA-1151 / DSM 17278 / SZ) (Geobacter lovleyi).